Reading from the N-terminus, the 689-residue chain is MTQHTFLVEIGTEELPPKALRALAEAFAIHISGELDAANVRHGEVSWFAAPRRLAVKVAALGGAQADSDVEKRGPAIAQVFDADGNPTKAAEGWARGCGITVSQAERLATDKGEWLVYRARVKGQPVQELLCAVVSRALGKLPIPKMMRWGDNETQFIRPVHTVTLLLDDGVIAGNVLGIDADRIVRGHRFMGEREISLEHADQYPQVLLDRGRVMADYLQRKETIRRDAEEAAKRLGGVADLSESLLEEVTSLVEWPVVLTARFEEKFLAVPAEALVYTMKGDQKYFPVYDAAGNLLPHFIFVANIESKDPQQIIAGNEKVVRPRLADAEFFFNTDHKQRLEDRLPRLDTVLFQKQLGTLRDKSDRIEALSAWIAGRIGADVPQAARAGLLSKCDLMTNMVFEFTDTQGVMGMHYARHDGEPEAVALAQKEQYQPRFAGDALPTTLVSCAVAIADKMDTLAGIFGIGQHPKGDKDPFALRRATLGVLRIIVEKQLPLDLQTLTEEAVRLYGEKLTNDAVVNDVIDFMLGRFRAWYQEQGHSVDTIQAVLARRPTRPADFDARVRAVSYFRTLEEAASLAAANKRVSNILAKSDDPVYKDLQASVLKDPSEITLATHLVVLREKLQPLFEAGRYQDALVELAALREPVDAFFDSVMVMADDPQVRINRLTLLAQLRKLFLQVADISLLQ.

The protein belongs to the class-II aminoacyl-tRNA synthetase family. In terms of assembly, tetramer of two alpha and two beta subunits.

Its subcellular location is the cytoplasm. The catalysed reaction is tRNA(Gly) + glycine + ATP = glycyl-tRNA(Gly) + AMP + diphosphate. This is Glycine--tRNA ligase beta subunit from Sodalis glossinidius (strain morsitans).